The primary structure comprises 1201 residues: DNA-directed RNA polymerase subunit beta' (1201 aa).

Zn(2+)-binding residues include C60, C62, C75, and C78. Mg(2+)-binding residues include D449, D451, and D453. Zn(2+)-binding residues include C818, C892, C899, and C902.

The protein belongs to the RNA polymerase beta' chain family. As to quaternary structure, the RNAP catalytic core consists of 2 alpha, 1 beta, 1 beta' and 1 omega subunit. When a sigma factor is associated with the core the holoenzyme is formed, which can initiate transcription. It depends on Mg(2+) as a cofactor. The cofactor is Zn(2+).

The catalysed reaction is RNA(n) + a ribonucleoside 5'-triphosphate = RNA(n+1) + diphosphate. Its function is as follows. DNA-dependent RNA polymerase catalyzes the transcription of DNA into RNA using the four ribonucleoside triphosphates as substrates. The chain is DNA-directed RNA polymerase subunit beta' from Listeria monocytogenes serotype 4b (strain F2365).